The following is a 304-amino-acid chain: Acetylglutamate kinase (304 aa).

Residues 77-78 (GG), arginine 99, and asparagine 193 each bind substrate.

This sequence belongs to the acetylglutamate kinase family. ArgB subfamily.

The protein resides in the cytoplasm. It catalyses the reaction N-acetyl-L-glutamate + ATP = N-acetyl-L-glutamyl 5-phosphate + ADP. Its pathway is amino-acid biosynthesis; L-arginine biosynthesis; N(2)-acetyl-L-ornithine from L-glutamate: step 2/4. In terms of biological role, catalyzes the ATP-dependent phosphorylation of N-acetyl-L-glutamate. The chain is Acetylglutamate kinase from Pelodictyon phaeoclathratiforme (strain DSM 5477 / BU-1).